A 332-amino-acid polypeptide reads, in one-letter code: MHLCHAITNISHRNSDWSREVQASLYSLMSLIILATLVGNLIVIISISHFKQLHTPTNWLLHSMAIVDFLLGCLIMPCSMVRTVERCWYFGEILCKVHTSTDIMLSSASIFHLAFISIDRYCAVCDPLRYKAKINISTILVMILVSWSLPAVYAFGMIFLELNLKGVEELYRSQVSDLGGCSPFFSKVSGVLAFMTSFYIPGSVMLFVYYRIYFIAKGQARSINRTNVQVGLEGKSQAPQSKETKAAKTLGIMVGVFLVCWCPFFLCTVLDPFLGYVIPPSLNDALYWFGYLNSALNPMVYAFFYPWFRRALKMVLLGKIFQKDSSRSKLFL.

Residues 1–23 are Extracellular-facing; the sequence is MHLCHAITNISHRNSDWSREVQA. Residue asparagine 9 is glycosylated (N-linked (GlcNAc...) asparagine). Residues 24 to 48 form a helical membrane-spanning segment; the sequence is SLYSLMSLIILATLVGNLIVIISIS. Over 49–58 the chain is Cytoplasmic; sequence HFKQLHTPTN. A helical transmembrane segment spans residues 59-80; sequence WLLHSMAIVDFLLGCLIMPCSM. Residues 81 to 95 are Extracellular-facing; that stretch reads VRTVERCWYFGEILC. Residues cysteine 95 and cysteine 181 are joined by a disulfide bond. Residues 96–118 form a helical membrane-spanning segment; it reads KVHTSTDIMLSSASIFHLAFISI. Aspartate 102 provides a ligand contact to 2-phenylethylamine. Residues 119–138 are Cytoplasmic-facing; sequence DRYCAVCDPLRYKAKINIST. Residues 139–160 form a helical membrane-spanning segment; the sequence is ILVMILVSWSLPAVYAFGMIFL. The Extracellular segment spans residues 161-187; the sequence is ELNLKGVEELYRSQVSDLGGCSPFFSK. The extracellular Loop 2 (ECL2) stretch occupies residues 174–185; it reads QVSDLGGCSPFF. A helical membrane pass occupies residues 188–210; sequence VSGVLAFMTSFYIPGSVMLFVYY. The Cytoplasmic portion of the chain corresponds to 211 to 246; sequence RIYFIAKGQARSINRTNVQVGLEGKSQAPQSKETKA. The chain crosses the membrane as a helical span at residues 247 to 270; the sequence is AKTLGIMVGVFLVCWCPFFLCTVL. Over 271-283 the chain is Extracellular; it reads DPFLGYVIPPSLN. Residues 284-304 traverse the membrane as a helical segment; the sequence is DALYWFGYLNSALNPMVYAFF. At 305–332 the chain is on the cytoplasmic side; the sequence is YPWFRRALKMVLLGKIFQKDSSRSKLFL.

The protein belongs to the G-protein coupled receptor 1 family. Widely distributed throughout the brain. Strongly expressed in the mitral cell layer of the olfactory bulb, piriform cortex, the arcuate, motor, and mesencephalic trigeminal nuclei, lateral reticular and hypoglossal nuclei, cerebellar Purkinje cells, and ventral horn of the spinal cord. Moderately expressed in the frontal, entorhinal, and agranular cortices, the ventral pallidum, thalamus, hippocampus, several hypothalamic nuclei, ambiguus, dorsal raphe, and gigantocellular reticular nuclei. Weakly expressed in the septum, basal ganglia, amygdala, myelencephalon, and spinal cord dorsal horn. Particularly interesting is the moderate expression in several monoaminergic cell groups, namely the dorsal raphe, the locus coeruleus, and the ventral tegmental area.

It localises to the endomembrane system. Its subcellular location is the endoplasmic reticulum membrane. The protein resides in the cell membrane. Its activity is regulated as follows. Activated by SEP-363856 small molecule: IHCH-7179 acts both as an agonist activator for HTR1A and TAAR1. Intracellular G-protein coupled receptor for trace amines, which recognizes endogenous amine-containing metabolites such as beta-phenylethylamine (beta-PEA), 3-iodothyronamine (T1AM), isoamylamine (IAA), cadaverine (CAD), cyclohexylamine (CHA), p-tyramine (p-TYR), trimethylamine (TMA), octopamine and tryptamine. Also functions as a receptor for various drugs and psychoactive substances, such as amphetamine and methamphetamine. Unresponsive to classical biogenic amines, such as epinephrine and histamine and only partially activated by dopamine and serotonin. Expressed in both the central and peripheral nervous system: TAAR1 activation regulates the activity of several neurotransmitter signaling pathways by (1) decreasing the basal firing rates of the neurons involved and by (2) lowering the sensitivity of receptors to neurotransmitters. Ligand binding causes a conformation change that triggers signaling via guanine nucleotide-binding proteins (G proteins) and modulates the activity of downstream effectors. TAAR1 is coupled with different G(i)/G(o)-, G(s)- or G(q)/G(11) classes of G alpha proteins depending on the ligand. CAD-binding is coupled to G(i)/G(o) G alpha proteins and mediates inhibition of adenylate cyclase activity. T1AM- or beta-PEA-binding is coupled to G(s) G alpha proteins and mediates activation of adenylate cyclase activity. CHA- or IAA-binding is coupled to G(q)/G(11) G alpha proteins and activates phospholipase C-beta, releasing diacylglycerol (DAG) and inositol 1,4,5-trisphosphate (IP3) second messengers. TMA-binding is coupled with all three G(i)/G(o)-, G(s)- or G(q)/G(11) G alpha protein subtypes. In Mus musculus (Mouse), this protein is Trace amine-associated receptor 1.